A 319-amino-acid polypeptide reads, in one-letter code: Carbonic anhydrase 6 (319 aa).

The N-terminal stretch at 1-14 (MITLLFLLVVGAQA) is a signal peptide. One can recognise an Alpha-carbonic anhydrase domain in the interval 16-273 (HEWTYSEGVL…LNHRVVEANF (258 aa)). C37 and C219 are joined by a disulfide. N-linked (GlcNAc...) asparagine glycosylation occurs at N62. The Proton donor/acceptor role is filled by H80. The Zn(2+) site is built by H106, H108, and H133. Residue 215-216 (TT) coordinates substrate. N-linked (GlcNAc...) asparagine glycosylation occurs at N251.

Belongs to the alpha-carbonic anhydrase family. It depends on Zn(2+) as a cofactor. Major constituent of saliva.

The protein resides in the secreted. The enzyme catalyses hydrogencarbonate + H(+) = CO2 + H2O. Reversible hydration of carbon dioxide. Its role in saliva is unknown. The sequence is that of Carbonic anhydrase 6 (CA6) from Bos taurus (Bovine).